Consider the following 259-residue polypeptide: AA9 family lytic polysaccharide monooxygenase E (259 aa).

The first 20 residues, 1 to 20 (MKATVLAGLAAVIAAQGVAG), serve as a signal peptide directing secretion. Residues His21 and His99 each coordinate Cu(2+). An intrachain disulfide couples Cys69 to Cys193. 2 residues coordinate O2: His179 and Gln188. Tyr190 lines the Cu(2+) pocket.

This sequence belongs to the polysaccharide monooxygenase AA9 family. Requires Cu(2+) as cofactor.

It localises to the secreted. It carries out the reaction [(1-&gt;4)-beta-D-glucosyl]n+m + reduced acceptor + O2 = 4-dehydro-beta-D-glucosyl-[(1-&gt;4)-beta-D-glucosyl]n-1 + [(1-&gt;4)-beta-D-glucosyl]m + acceptor + H2O.. Its function is as follows. Lytic polysaccharide monooxygenase (LPMO) that depolymerizes crystalline and amorphous polysaccharides via the oxidation of scissile alpha- or beta-(1-4)-glycosidic bonds, yielding C1 or C4 oxidation products. Catalysis by LPMOs requires the reduction of the active-site copper from Cu(II) to Cu(I) by a reducing agent and H(2)O(2) or O(2) as a cosubstrate. The protein is AA9 family lytic polysaccharide monooxygenase E of Malbranchea cinnamomea (Thermophilic fungus).